The chain runs to 179 residues: Pyridoxal 5'-phosphate synthase subunit PdxT (179 aa).

48–50 is an L-glutamine binding site; it reads GES. The Nucleophile role is filled by C79. Residues R101 and 127-128 each bind L-glutamine; that span reads IR. Residues H163 and E165 each act as charge relay system in the active site.

This sequence belongs to the glutaminase PdxT/SNO family. In terms of assembly, in the presence of PdxS, forms a dodecamer of heterodimers. Only shows activity in the heterodimer.

It catalyses the reaction aldehydo-D-ribose 5-phosphate + D-glyceraldehyde 3-phosphate + L-glutamine = pyridoxal 5'-phosphate + L-glutamate + phosphate + 3 H2O + H(+). The catalysed reaction is L-glutamine + H2O = L-glutamate + NH4(+). The protein operates within cofactor biosynthesis; pyridoxal 5'-phosphate biosynthesis. In terms of biological role, catalyzes the hydrolysis of glutamine to glutamate and ammonia as part of the biosynthesis of pyridoxal 5'-phosphate. The resulting ammonia molecule is channeled to the active site of PdxS. The protein is Pyridoxal 5'-phosphate synthase subunit PdxT of Francisella philomiragia subsp. philomiragia (strain ATCC 25017 / CCUG 19701 / FSC 153 / O#319-036).